A 3414-amino-acid chain; its full sequence is Genome polyprotein (3414 aa).

Positions M1–R27 are disordered. The Cytoplasmic portion of the chain corresponds to M1–T98. The span at R17–R27 shows a compositional bias: basic residues. Residues T97–A117 constitute a propeptide, ER anchor for the capsid protein C, removed in mature form by serine protease NS3. Residues I99–A117 form a helical membrane-spanning segment. Residues T118 to W242 lie on the Extracellular side of the membrane. N144 carries N-linked (GlcNAc...) asparagine; by host glycosylation. Residues K243–D260 form a helical membrane-spanning segment. G261 is a topological domain (cytoplasmic). The helical transmembrane segment at L262–A280 threads the bilayer. Over S281–T727 the chain is Extracellular. Cystine bridges form between C283–C310, C340–C396, C340–C401, C354–C385, C372–C396, and C372–C401. A fusion peptide region spans residues D378–G391. N434 is a glycosylation site (N-linked (GlcNAc...) asparagine; by host). Cystine bridges form between C466/C570 and C587/C618. Residues L728–G748 traverse the membrane as a helical segment. The Cytoplasmic portion of the chain corresponds to L749 to T755. Residues L756–A776 traverse the membrane as a helical segment. At D777–Y1187 the chain is on the extracellular side. 6 cysteine pairs are disulfide-bonded: C780/C791, C831/C920, C955/C1000, C1057/C1106, C1068/C1090, and C1089/C1093. 3 N-linked (GlcNAc...) asparagine; by host glycosylation sites follow: N861, N983, and N999. The helical transmembrane segment at L1188–L1208 threads the bilayer. The Cytoplasmic portion of the chain corresponds to L1209 to R1232. Residues E1233–L1253 traverse the membrane as a helical segment. The Lumenal portion of the chain corresponds to E1254–A1267. A helical membrane pass occupies residues I1268–F1288. Residues M1289 to G1300 lie on the Cytoplasmic side of the membrane. Residues L1301 to G1319 form a helical membrane-spanning segment. Over Q1320–G1325 the chain is Lumenal. A helical transmembrane segment spans residues L1326–L1346. Topologically, residues A1347–S1359 are cytoplasmic. Residues F1360 to M1378 form a helical membrane-spanning segment. Topologically, residues R1379 to S1382 are lumenal. Residues Q1383–T1403 form a helical membrane-spanning segment. Topologically, residues R1404–A1454 are cytoplasmic. Residues A1410–E1449 form an interacts with and activates NS3 protease region. Positions F1455–M1475 form an intramembrane region, helical. Over G1476–A2160 the chain is Cytoplasmic. The 180-residue stretch at T1490 to P1669 folds into the Peptidase S7 domain. Residues H1543, D1567, and S1627 each act as charge relay system; for serine protease NS3 activity in the active site. Residues T1675–E1831 form the Helicase ATP-binding domain. M1688 to T1695 contributes to the ATP binding site. The short motif at D1779–H1782 is the DEAH box element. The 160-residue stretch at D1841–Y2000 folds into the Helicase C-terminal domain. K1883 is modified (N6-acetyllysine; by host). The helical transmembrane segment at F2161–F2181 threads the bilayer. Residues V2182 to R2189 are Lumenal-facing. The helical intramembrane region spans M2190–V2209. Position 2210 (G2210) is a topological domain, lumenal. The helical transmembrane segment at Y2211–E2231 threads the bilayer. The Cytoplasmic segment spans residues T2232–S2238. The helical transmembrane segment at D2239–A2259 threads the bilayer. Residues N2260–P2296 lie on the Lumenal side of the membrane. The helical intramembrane region spans A2297–L2315. The Lumenal segment spans residues H2316–G2343. The segment at residues T2344–A2364 is an intramembrane region (helical). At T2365 to S2368 the chain is on the lumenal side. The chain crosses the membrane as a helical span at residues L2369 to A2389. The Cytoplasmic segment spans residues E2390–S2432. A helical transmembrane segment spans residues L2433–V2453. Residues T2454–T2477 are Lumenal-facing. The helical transmembrane segment at M2478–L2498 threads the bilayer. The Cytoplasmic portion of the chain corresponds to G2499–F3414. Positions G2512–S2776 constitute an mRNA cap 0-1 NS5-type MT domain. Position 2567 (S2567) interacts with S-adenosyl-L-methionine. At S2567 the chain carries Phosphoserine. K2572 functions as the For 2'-O-MTase activity in the catalytic mechanism. 6 residues coordinate S-adenosyl-L-methionine: G2597, W2598, T2615, I2616, D2642, and V2643. The active-site For 2'-O-MTase activity is D2657. I2658 contributes to the S-adenosyl-L-methionine binding site. Catalysis depends on for 2'-O-MTase activity residues K2694 and E2730. Positions E2730 to S2734 are interaction with host SCRIB. Residue Y2732 coordinates S-adenosyl-L-methionine. Zn(2+) is bound by residues E2950, H2954, C2959, and C2962. One can recognise a RdRp catalytic domain in the interval G3040–A3189. The Zn(2+) site is built by H3224, C3240, and C3359.

The protein in the N-terminal section; belongs to the class I-like SAM-binding methyltransferase superfamily. mRNA cap 0-1 NS5-type methyltransferase family. Homodimer. Interacts (via N-terminus) with host EXOC1 (via C-terminus); this interaction results in EXOC1 degradation through the proteasome degradation pathway. In terms of assembly, forms heterodimers with envelope protein E in the endoplasmic reticulum and Golgi. As to quaternary structure, homodimer; in the endoplasmic reticulum and Golgi. Interacts with protein prM. Interacts with non-structural protein 1. Homodimer; Homohexamer when secreted. Interacts with envelope protein E. In terms of assembly, interacts (via N-terminus) with serine protease NS3. As to quaternary structure, forms a heterodimer with serine protease NS3. May form homooligomers. Forms a heterodimer with NS2B. Interacts with non-structural protein 2A (via N-terminus). Interacts with NS4B. Interacts with unphosphorylated RNA-directed RNA polymerase NS5; this interaction stimulates RNA-directed RNA polymerase NS5 guanylyltransferase activity. In terms of assembly, interacts with serine protease NS3. Interacts with NS1. As to quaternary structure, homodimer. Interacts with host STAT2; this interaction inhibits the phosphorylation of the latter, and, when all viral proteins are present (polyprotein), targets STAT2 for degradation. Interacts with serine protease NS3. Interacts with host SCRIB; this interaction targets NS5 to the cell membrane periphery and nucleus, thereby allowing efficient host nuclear STAT1 inhibition. In terms of processing, specific enzymatic cleavages in vivo yield mature proteins. Cleavages in the lumen of endoplasmic reticulum are performed by host signal peptidase, whereas cleavages in the cytoplasmic side are performed by serine protease NS3. Signal cleavage at the 2K-4B site requires a prior NS3 protease-mediated cleavage at the 4A-2K site. Cleaved in post-Golgi vesicles by a host furin, releasing the mature small envelope protein M, and peptide pr. This cleavage is incomplete as up to 30% of viral particles still carry uncleaved prM. Post-translationally, N-glycosylated. In terms of processing, N-glycosylated. The excreted form is glycosylated and this is required for efficient secretion of the protein from infected cells. Acetylated by host KAT5. Acetylation modulates NS3 RNA-binding and unwinding activities and plays an important positive role for viral replication. Post-translationally, phosphorylated on serines residues. This phosphorylation may trigger NS5 nuclear localization.

It is found in the virion. Its subcellular location is the host nucleus. It localises to the host cytoplasm. The protein resides in the host perinuclear region. The protein localises to the secreted. It is found in the virion membrane. Its subcellular location is the host endoplasmic reticulum membrane. The enzyme catalyses Selective hydrolysis of -Xaa-Xaa-|-Yaa- bonds in which each of the Xaa can be either Arg or Lys and Yaa can be either Ser or Ala.. It catalyses the reaction RNA(n) + a ribonucleoside 5'-triphosphate = RNA(n+1) + diphosphate. It carries out the reaction a ribonucleoside 5'-triphosphate + H2O = a ribonucleoside 5'-diphosphate + phosphate + H(+). The catalysed reaction is ATP + H2O = ADP + phosphate + H(+). The enzyme catalyses a 5'-end (5'-triphosphoguanosine)-ribonucleoside in mRNA + S-adenosyl-L-methionine = a 5'-end (N(7)-methyl 5'-triphosphoguanosine)-ribonucleoside in mRNA + S-adenosyl-L-homocysteine. It catalyses the reaction a 5'-end (N(7)-methyl 5'-triphosphoguanosine)-ribonucleoside in mRNA + S-adenosyl-L-methionine = a 5'-end (N(7)-methyl 5'-triphosphoguanosine)-(2'-O-methyl-ribonucleoside) in mRNA + S-adenosyl-L-homocysteine + H(+). In terms of biological role, plays a role in virus budding by binding to membrane and gathering the viral RNA into a nucleocapsid that forms the core of a mature virus particle. During virus entry, may induce genome penetration in host cytoplasm after hemifusion induced by surface proteins. Can migrate to the cell nucleus where it modulates host functions. Inhibits RNA silencing by interfering with host Dicer. Its function is as follows. Prevents premature fusion activity of envelope proteins in trans-Golgi by binding to envelope protein E at pH6.0. After virion release in extracellular space gets dissociated from E dimers. Functionally, acts as a chaperone for envelope protein E during intracellular virion assembly by masking and inactivating envelope protein E fusion peptide. prM is the only viral peptide matured by host furin in the trans-Golgi network. Presumably to avoid catastrophic activation of the viral fusion activity in acidic GolGi compartment prior to virion release. prM-E cleavage is ineficient, and many virions are only partially matured. These uncleaved prM would play a role in immune evasion. In terms of biological role, may play a role in virus budding. Exerts cytotoxic effects by activating a mitochondrial apoptotic pathway through M extodomain. May display a viroporin activity. Binds to host cell surface receptor and mediates fusion between viral and cellular membranes. Envelope protein is synthesized in the endoplasmic reticulum in the form of heterodimer with protein prM. They play a role in virion budding in the ER, and the newly formed immature particle is covered with 60 spikes composed of heterodimer between precursor prM and envelope protein E. The virion is transported to the Golgi apparatus where the low pH causes dissociation of PrM-E heterodimers and formation of E homodimers. prM-E cleavage is ineficient, and many virions are only partially matured. These uncleaved prM would play a role in immune evasion. Its function is as follows. Involved in immune evasion, pathogenesis and viral replication. Once cleaved off the polyprotein, is targeted to three destinations: the viral replication cycle, the plasma membrane and the extracellular compartment. Essential for viral replication. Required for formation of the replication complex and recruitment of other non-structural proteins to the ER-derived membrane structures. Excreted as a hexameric lipoparticle that plays a role against host immune response. Antagonizing the complement function. Binds to the host macrophages and dendritic cells. Inhibits signal transduction originating from Toll-like receptor 3 (TLR3). Functionally, component of the viral RNA replication complex that functions in virion assembly and antagonizes the host immune response. In terms of biological role, required cofactor for the serine protease function of NS3. May have membrane-destabilizing activity and form viroporins. Displays three enzymatic activities: serine protease, NTPase and RNA helicase. NS3 serine protease, in association with NS2B, performs its autocleavage and cleaves the polyprotein at dibasic sites in the cytoplasm: C-prM, NS2A-NS2B, NS2B-NS3, NS3-NS4A, NS4A-2K and NS4B-NS5. NS3 RNA helicase binds RNA and unwinds dsRNA in the 3' to 5' direction. Its function is as follows. Regulates the ATPase activity of the NS3 helicase activity. NS4A allows NS3 helicase to conserve energy during unwinding. Functionally, functions as a signal peptide for NS4B and is required for the interferon antagonism activity of the latter. In terms of biological role, induces the formation of ER-derived membrane vesicles where the viral replication takes place. Inhibits interferon (IFN)-induced host STAT1 phosphorylation and nuclear translocation, thereby preventing the establishment of cellular antiviral state by blocking the IFN-alpha/beta pathway. Inhibits STAT2 translocation in the nucleus after IFN-alpha treatment. Replicates the viral (+) and (-) genome, and performs the capping of genomes in the cytoplasm. NS5 methylates viral RNA cap at guanine N-7 and ribose 2'-O positions. Besides its role in genome replication, also prevents the establishment of cellular antiviral state by blocking the interferon-alpha/beta (IFN-alpha/beta) signaling pathway. Inhibits host TYK2 and STAT2 phosphorylation, thereby preventing activation of JAK-STAT signaling pathway. The polypeptide is Genome polyprotein (Homo sapiens (Human)).